We begin with the raw amino-acid sequence, 324 residues long: MTTRPHIAVIGAGAWGTALACATAATGADVTLWMRNPVPPRTRTLPRLPDITLPENVTITGDFPRTANVVLLVTPVQTARDVSTRLQTVLDPAVPVVTCCKGLEQATSLLPLDVLAETMPGRPTGVLSGPNFAIEVAKGLPAAATLACADLALAQKLTALLNTSSFRLYASDDAAGVQLAGAAKNVIAIGAGITIGAGLGENARAALITRAVAEIGRLAEATGGRASTLAGLAGMGDLILTCTGRGSRNYSVGLELGEGRPLADILASRTTVAEGVLTAPAMLALARKHNVRVPIIETVTRLLNDGVSIEEARHLLLDRPPTRE.

Residues Trp15, Arg35, and Lys101 each contribute to the NADPH site. Positions 101 and 129 each coordinate sn-glycerol 3-phosphate. Residue Ala133 coordinates NADPH. Sn-glycerol 3-phosphate is bound by residues Lys184, Asp237, Ser247, Arg248, and Asn249. Lys184 functions as the Proton acceptor in the catalytic mechanism. Arg248 contributes to the NADPH binding site. NADPH-binding residues include Val272 and Glu274.

Belongs to the NAD-dependent glycerol-3-phosphate dehydrogenase family.

Its subcellular location is the cytoplasm. The catalysed reaction is sn-glycerol 3-phosphate + NAD(+) = dihydroxyacetone phosphate + NADH + H(+). It catalyses the reaction sn-glycerol 3-phosphate + NADP(+) = dihydroxyacetone phosphate + NADPH + H(+). It functions in the pathway membrane lipid metabolism; glycerophospholipid metabolism. Its function is as follows. Catalyzes the reduction of the glycolytic intermediate dihydroxyacetone phosphate (DHAP) to sn-glycerol 3-phosphate (G3P), the key precursor for phospholipid synthesis. This chain is Glycerol-3-phosphate dehydrogenase [NAD(P)+], found in Gluconobacter oxydans (strain 621H) (Gluconobacter suboxydans).